Here is a 444-residue protein sequence, read N- to C-terminus: Serine/threonine-protein kinase 2 (444 aa).

The 358-residue stretch at 87–444 (NRDFYHLSTG…WIDGKSTSHQ (358 aa)) folds into the Protein kinase domain. ATP contacts are provided by residues 93–101 (LSTGGYGII) and K118. D307 (proton acceptor) is an active-site residue.

Belongs to the protein kinase superfamily. Ser/Thr protein kinase family. Poxviruses subfamily. Post-translationally, phosphorylated in vivo. Autophosphorylated in vitro.

Its subcellular location is the host endoplasmic reticulum. The protein localises to the host endoplasmic reticulum-Golgi intermediate compartment. The catalysed reaction is L-seryl-[protein] + ATP = O-phospho-L-seryl-[protein] + ADP + H(+). The enzyme catalyses L-threonyl-[protein] + ATP = O-phospho-L-threonyl-[protein] + ADP + H(+). Its function is as follows. Essential serine-protein kinase involved in the early stage of virion morphogenesis. The polypeptide is Serine/threonine-protein kinase 2 (OPG054) (Vertebrata (FPV)).